The sequence spans 720 residues: Fatty acid CoA ligase Acsl3 (720 aa).

The chain crosses the membrane as a helical; Signal-anchor for type III membrane protein span at residues Ile-21 to Phe-41. Residues Tyr-42 to Lys-720 lie on the Cytoplasmic side of the membrane. Ser-683 is subject to Phosphoserine.

It belongs to the ATP-dependent AMP-binding enzyme family. The cofactor is Mg(2+). As to expression, predominantly expressed in the brain, and to a much lesser extent, in lung, adrenal gland, kidney, small intestine, and adipose tissue but not detected in heart or liver.

The protein resides in the mitochondrion outer membrane. The protein localises to the peroxisome membrane. Its subcellular location is the microsome membrane. It localises to the endoplasmic reticulum membrane. It catalyses the reaction a long-chain fatty acid + ATP + CoA = a long-chain fatty acyl-CoA + AMP + diphosphate. The catalysed reaction is (5Z,8Z,11Z,14Z)-eicosatetraenoate + ATP + CoA = (5Z,8Z,11Z,14Z)-eicosatetraenoyl-CoA + AMP + diphosphate. It carries out the reaction a medium-chain fatty acid + ATP + CoA = a medium-chain fatty acyl-CoA + AMP + diphosphate. The enzyme catalyses 15-hydroxy-(5Z,8Z,11Z,13E)-eicosatetraenoate + ATP + CoA = 15-hydroxy-(5Z,8Z,11Z,13E)-eicosatetraenoyl-CoA + AMP + diphosphate. It catalyses the reaction 12-hydroxy-(5Z,8Z,10E,14Z)-eicosatetraenoate + ATP + CoA = 12-hydroxy-(5Z,8Z,10E,14Z)-eicosatetraenoyl-CoA + AMP + diphosphate. The catalysed reaction is 5-hydroxy-(6E,8Z,11Z,14Z)-eicosatetraenoate + ATP + CoA = 5-hydroxy-(6E,8Z,11Z,14Z)-eicosatetraenoyl-CoA + AMP + diphosphate. It carries out the reaction 14,15-epoxy-(5Z,8Z,11Z)-eicosatrienoate + ATP + CoA = 14,15-epoxy-(5Z,8Z,11Z)-eicosatrienoyl-CoA + AMP + diphosphate. The enzyme catalyses 11,12-epoxy-(5Z,8Z,14Z)-eicosatrienoate + ATP + CoA = 11,12-epoxy-(5Z,8Z,14Z)-eicosatrienoyl-CoA + AMP + diphosphate. It catalyses the reaction (E)-hexadec-2-enoate + ATP + CoA = (2E)-hexadecenoyl-CoA + AMP + diphosphate. The catalysed reaction is hexadecanoate + ATP + CoA = hexadecanoyl-CoA + AMP + diphosphate. It carries out the reaction tetradecanoate + ATP + CoA = tetradecanoyl-CoA + AMP + diphosphate. The enzyme catalyses dodecanoate + ATP + CoA = dodecanoyl-CoA + AMP + diphosphate. It catalyses the reaction octadecanoate + ATP + CoA = octadecanoyl-CoA + AMP + diphosphate. The catalysed reaction is eicosanoate + ATP + CoA = eicosanoyl-CoA + AMP + diphosphate. It carries out the reaction (9Z)-octadecenoate + ATP + CoA = (9Z)-octadecenoyl-CoA + AMP + diphosphate. The enzyme catalyses (9Z)-hexadecenoate + ATP + CoA = (9Z)-hexadecenoyl-CoA + AMP + diphosphate. It catalyses the reaction (9Z,12Z)-octadecadienoate + ATP + CoA = (9Z,12Z)-octadecadienoyl-CoA + AMP + diphosphate. The catalysed reaction is (9Z,12Z,15Z)-octadecatrienoate + ATP + CoA = (9Z,12Z,15Z)-octadecatrienoyl-CoA + AMP + diphosphate. It carries out the reaction (4Z,7Z,10Z,13Z,16Z,19Z)-docosahexaenoate + ATP + CoA = (4Z,7Z,10Z,13Z,16Z,19Z)-docosahexaenoyl-CoA + AMP + diphosphate. The enzyme catalyses (5Z,8Z,11Z,14Z,17Z)-eicosapentaenoate + ATP + CoA = (5Z,8Z,11Z,14Z,17Z)-eicosapentaenoyl-CoA + AMP + diphosphate. It catalyses the reaction a fatty acid + ATP + CoA = a fatty acyl-CoA + AMP + diphosphate. Its function is as follows. Catalyzes the conversion of long-chain fatty acids to their active form acyl-CoA for both synthesis of cellular lipids, and degradation via beta-oxidation. ACSL3 is required for the incorporation of fatty acids into phosphatidylcholine, the major phospholipid located on the surface of VLDL (very low density lipoproteins). Has mainly an anabolic role in energy metabolism. Mediates hepatic lipogenesis. Preferentially uses myristate, laurate, arachidonate and eicosapentaenoate as substrates. Both isoforms exhibit the same level of activity. In Rattus norvegicus (Rat), this protein is Fatty acid CoA ligase Acsl3.